The sequence spans 53 residues: Alpha-1-antiproteinase 1 (53 aa).

The disordered stretch occupies residues 1–28; that stretch reads EDLQGDAVPETSATKDDNEXPEMIPMSL.

This sequence belongs to the serpin family. In terms of processing, N-glycosylated; contains biantennary glycans. As to expression, plasma.

The protein localises to the secreted. In Equus caballus (Horse), this protein is Alpha-1-antiproteinase 1.